Reading from the N-terminus, the 347-residue chain is Tetraacyldisaccharide 4'-kinase (347 aa).

Residue 64-71 (YVGGTGKT) coordinates ATP.

It belongs to the LpxK family.

The enzyme catalyses a lipid A disaccharide + ATP = a lipid IVA + ADP + H(+). The protein operates within glycolipid biosynthesis; lipid IV(A) biosynthesis; lipid IV(A) from (3R)-3-hydroxytetradecanoyl-[acyl-carrier-protein] and UDP-N-acetyl-alpha-D-glucosamine: step 6/6. In terms of biological role, transfers the gamma-phosphate of ATP to the 4'-position of a tetraacyldisaccharide 1-phosphate intermediate (termed DS-1-P) to form tetraacyldisaccharide 1,4'-bis-phosphate (lipid IVA). The sequence is that of Tetraacyldisaccharide 4'-kinase from Bordetella bronchiseptica (strain ATCC BAA-588 / NCTC 13252 / RB50) (Alcaligenes bronchisepticus).